Here is an 89-residue protein sequence, read N- to C-terminus: Large ribosomal subunit protein bL27 (89 aa).

The segment at 1–22 (MAQKKAGGSSRNGRDSAGRRLG) is disordered.

The protein belongs to the bacterial ribosomal protein bL27 family.

The sequence is that of Large ribosomal subunit protein bL27 from Gluconacetobacter diazotrophicus (strain ATCC 49037 / DSM 5601 / CCUG 37298 / CIP 103539 / LMG 7603 / PAl5).